The chain runs to 77 residues: NAD(P)H-quinone oxidoreductase subunit L (77 aa).

The next 2 membrane-spanning stretches (helical) occupy residues 12–32 (LIAY…LLFY) and 47–67 (LGIY…SPFL).

The protein belongs to the complex I NdhL subunit family. As to quaternary structure, NDH-1 can be composed of about 15 different subunits; different subcomplexes with different compositions have been identified which probably have different functions.

It is found in the cellular thylakoid membrane. The catalysed reaction is a plastoquinone + NADH + (n+1) H(+)(in) = a plastoquinol + NAD(+) + n H(+)(out). It carries out the reaction a plastoquinone + NADPH + (n+1) H(+)(in) = a plastoquinol + NADP(+) + n H(+)(out). In terms of biological role, NDH-1 shuttles electrons from an unknown electron donor, via FMN and iron-sulfur (Fe-S) centers, to quinones in the respiratory and/or the photosynthetic chain. The immediate electron acceptor for the enzyme in this species is believed to be plastoquinone. Couples the redox reaction to proton translocation, and thus conserves the redox energy in a proton gradient. Cyanobacterial NDH-1 also plays a role in inorganic carbon-concentration. This chain is NAD(P)H-quinone oxidoreductase subunit L, found in Prochlorococcus marinus (strain MIT 9301).